Consider the following 385-residue polypeptide: Putative ESX-1 scaffolding and assembly protein SaeC (385 aa).

The protein localises to the cytoplasm. May be involved in assembly of the ESX-1 / type VII specialized secretion system (T7SS), which exports several proteins including EsxA and EsxB. Involved in DNA conjugation in recipient (MKD8) strain. This chain is Putative ESX-1 scaffolding and assembly protein SaeC, found in Mycolicibacterium smegmatis (strain ATCC 700084 / mc(2)155) (Mycobacterium smegmatis).